Here is a 211-residue protein sequence, read N- to C-terminus: MSRVATTAALNLAKSLRDAGIRDEAVLQAVANTPRELFLDAALGHKAYENTALPIGMGQTISQPYIVARMTELLLEHKPKKVLEIGTGSGYQAAILAQLSPELCTVERIKSLQIQARQRLKRLDLHNISFKYGDGWKGWPNKGPFDAIMVTAAAATVPEALLGQLVDNGVLIIPVGDTSQQLLKVVRHGEQFSSEVVEIVRFVPLVNGELA.

The active site involves Ser62.

The protein belongs to the methyltransferase superfamily. L-isoaspartyl/D-aspartyl protein methyltransferase family.

Its subcellular location is the cytoplasm. The catalysed reaction is [protein]-L-isoaspartate + S-adenosyl-L-methionine = [protein]-L-isoaspartate alpha-methyl ester + S-adenosyl-L-homocysteine. Catalyzes the methyl esterification of L-isoaspartyl residues in peptides and proteins that result from spontaneous decomposition of normal L-aspartyl and L-asparaginyl residues. It plays a role in the repair and/or degradation of damaged proteins. This Shewanella woodyi (strain ATCC 51908 / MS32) protein is Protein-L-isoaspartate O-methyltransferase.